The following is a 504-amino-acid chain: MTSLISVKNLSKSFPGVKALDQVHFDLRAGEVHALMGENGAGKSTLMKILAGVYRKDSGEMLLDGQPVEIESPAHAQSLAIGIVHQELHLMNHLTAAQNIYLGREPRHCGGLFLDEARLNQDTQILFDRLNLALAPTTAIGELTVARQQMVEIAKALSFKSRVLIMDEPTAALNNAEIDELFRIIRQLKSEGVGIVYISHKMDEIQRIADRITVMRDGSTIGTVPASTPMQQVIAMMVGRNLEQAEKHIPDTSANEVLLEVRGLNRGRVIRDVNFSVRRGEILGFAGLMGAGRTEVARAVFGADPIDSGEVRVRGELIRLASPQDAVQAGIGYLSEDRKHFGLATGMDVESNITLPSLKRWLKWGLFLNQPAIHHISQQMVGKLRIKTPSLTQTARLLSGGNQQKVVVAKWLVQDCDVLIFDEPTRGIDVGAKSEIYKLLNELATQGKAIIVISSELPEVLLLSHRVLVMCEGRITGEVAGDVATQETLMALATRRESLASTVH.

ABC transporter domains lie at 5-242 (ISVK…GRNL) and 252-497 (TSAN…TRRE). Position 37 to 44 (37 to 44 (GENGAGKS)) interacts with ATP.

The protein belongs to the ABC transporter superfamily. Carbohydrate importer 2 (CUT2) (TC 3.A.1.2) family.

The protein localises to the cell inner membrane. It catalyses the reaction D-ribose(out) + ATP + H2O = D-ribose(in) + ADP + phosphate + H(+). The catalysed reaction is D-galactose(out) + ATP + H2O = D-galactose(in) + ADP + phosphate + H(+). In terms of biological role, part of an ABC transporter complex involved in carbohydrate import. Could be involved in ribose, galactose and/or methyl galactoside import. Responsible for energy coupling to the transport system. This is Putative ribose/galactose/methyl galactoside import ATP-binding protein from Albidiferax ferrireducens (strain ATCC BAA-621 / DSM 15236 / T118) (Rhodoferax ferrireducens).